The sequence spans 407 residues: Phosphopentomutase (407 aa).

Mn(2+) contacts are provided by Asp-10, Asp-306, His-311, Asp-347, His-348, and His-359.

The protein belongs to the phosphopentomutase family. Mn(2+) serves as cofactor.

It localises to the cytoplasm. It carries out the reaction 2-deoxy-alpha-D-ribose 1-phosphate = 2-deoxy-D-ribose 5-phosphate. It catalyses the reaction alpha-D-ribose 1-phosphate = D-ribose 5-phosphate. Its pathway is carbohydrate degradation; 2-deoxy-D-ribose 1-phosphate degradation; D-glyceraldehyde 3-phosphate and acetaldehyde from 2-deoxy-alpha-D-ribose 1-phosphate: step 1/2. Functionally, isomerase that catalyzes the conversion of deoxy-ribose 1-phosphate (dRib-1-P) and ribose 1-phosphate (Rib-1-P) to deoxy-ribose 5-phosphate (dRib-5-P) and ribose 5-phosphate (Rib-5-P), respectively. The protein is Phosphopentomutase of Sodalis glossinidius (strain morsitans).